The primary structure comprises 807 residues: MNSSNNNDSSSSNSNMNNSLSPTLVTHSDASMGSGRASPDNSHMGRGIWNPSYVNQGSQRSPQQQHQNHHQQQQQQQQQQQQNSQFCFVNPWNEEKVTNSQQNLVYPPQYDDLNSNESLDAYRRRKSSLVVPPARAPAPNPFQYDSYPAYTSSNTSLAGNSSGQYPSGYQQQQQQVYQQGAIHPSQFGSRFVPSLYDRQDFQRRQSLAATNYSSNFSSLNSNTNQGTNSIPVMSPYRRLSAYPPSTSPPLQPPFKQLRRDEVQGQKLSIPQMQLCNSKNDLQPVLNATPKFRRASLNSKTISPLVSVTKSLITTYSLCSPEFTYQTSKNPKRVLTKPSEGKCNNGFDNINSDYILYVNDVLGVEQNRKYLVLDILGQGTFGQVVKCQNLLTKEILAVKVVKSRTEYLTQSITEAKILELLNQKIDPTNKHHFLRMYDSFVHKNHLCLVFELLSNNLYELLKQNKFHGLSIQLIRTFTTQILDSLCVLKESKLIHCDLKPENILLCAPDKPELKIIDFGSSCEEARTVYTYIQSRFYRAPEIILGIPYSTSIDMWSLGCIVAELFLGIPIFPGASEYNQLTRIIDTLGYPPSWMIDMGKNSGKFMKKLAPEESSSSTQKHRMKTIEEFCREYNIVEKPSKQYFKWRKLPDIIRNYRYPKSIQNSQELIDQEMQNRECLIHFLGGVLNLNPLERWTPQQAMLHPFITKQEFTGEWFPPGSSLPGPSEKHDDAKGQQSEYGSANDSSNNAGHNYVYNPSSATGGADSVDIGAISKRKENTSGDISNNFAVTHSVQEGPTSAFNKLHIVEE.

A compositionally biased stretch (low complexity) spans 1–19; the sequence is MNSSNNNDSSSSNSNMNNS. The tract at residues 1 to 84 is disordered; sequence MNSSNNNDSS…QQQQQQQQNS (84 aa). Residues 20–31 show a composition bias toward polar residues; the sequence is LSPTLVTHSDAS. A Phosphoserine modification is found at Ser38. Over residues 55–84 the composition is skewed to low complexity; it reads NQGSQRSPQQQHQNHHQQQQQQQQQQQQNS. A phosphoserine mark is found at Ser115, Ser118, and Ser127. The tract at residues 124 to 180 is disordered; it reads RRKSSLVVPPARAPAPNPFQYDSYPAYTSSNTSLAGNSSGQYPSGYQQQQQQVYQQG. Polar residues predominate over residues 149–160; it reads AYTSSNTSLAGN. The segment covering 161 to 180 has biased composition (low complexity); sequence SSGQYPSGYQQQQQQVYQQG. Ser206 bears the Phosphoserine mark. Residues 214–224 are compositionally biased toward low complexity; the sequence is SNFSSLNSNTN. The disordered stretch occupies residues 214–254; it reads SNFSSLNSNTNQGTNSIPVMSPYRRLSAYPPSTSPPLQPPF. Residues Ser240, Ser245, and Ser247 each carry the phosphoserine modification. Residue Thr288 is modified to Phosphothreonine. Ser295 is subject to Phosphoserine. The 336-residue stretch at 369-704 folds into the Protein kinase domain; it reads YLVLDILGQG…PQQAMLHPFI (336 aa). ATP is bound by residues 375-383 and Lys398; that span reads LGQGTFGQV. Catalysis depends on Asp496, which acts as the Proton acceptor. Tyr530 is subject to Phosphotyrosine. The tract at residues 714-758 is disordered; the sequence is FPPGSSLPGPSEKHDDAKGQQSEYGSANDSSNNAGHNYVYNPSSA. Positions 732–758 are enriched in polar residues; sequence GQQSEYGSANDSSNNAGHNYVYNPSSA.

This sequence belongs to the protein kinase superfamily. CMGC Ser/Thr protein kinase family. MNB/DYRK subfamily. Post-translationally, phosphorylated; highly.

It is found in the cytoplasm. It localises to the nucleus. The catalysed reaction is L-seryl-[protein] + ATP = O-phospho-L-seryl-[protein] + ADP + H(+). It carries out the reaction L-threonyl-[protein] + ATP = O-phospho-L-threonyl-[protein] + ADP + H(+). The enzyme catalyses L-tyrosyl-[protein] + ATP = O-phospho-L-tyrosyl-[protein] + ADP + H(+). Functionally, negative regulator of the cell cycle acting downstream of the cAMP-dependent protein kinase. Part of a glucose-sensing system involved in growth control in response to glucose availability. Phosphorylates POP2. This chain is Dual specificity protein kinase YAK1 (YAK1), found in Saccharomyces cerevisiae (strain ATCC 204508 / S288c) (Baker's yeast).